A 184-amino-acid chain; its full sequence is Large ribosomal subunit protein uL22B (184 aa).

Lys-46 participates in a covalent cross-link: Glycyl lysine isopeptide (Lys-Gly) (interchain with G-Cter in ubiquitin). Position 70 is a phosphothreonine (Thr-70).

It belongs to the universal ribosomal protein uL22 family. Component of the large ribosomal subunit (LSU). Mature yeast ribosomes consist of a small (40S) and a large (60S) subunit. The 40S small subunit contains 1 molecule of ribosomal RNA (18S rRNA) and 33 different proteins (encoded by 57 genes). The large 60S subunit contains 3 rRNA molecules (25S, 5.8S and 5S rRNA) and 46 different proteins (encoded by 81 genes). uL22 is associated with the polypeptide exit tunnel.

The protein localises to the cytoplasm. In terms of biological role, component of the ribosome, a large ribonucleoprotein complex responsible for the synthesis of proteins in the cell. The small ribosomal subunit (SSU) binds messenger RNAs (mRNAs) and translates the encoded message by selecting cognate aminoacyl-transfer RNA (tRNA) molecules. The large subunit (LSU) contains the ribosomal catalytic site termed the peptidyl transferase center (PTC), which catalyzes the formation of peptide bonds, thereby polymerizing the amino acids delivered by tRNAs into a polypeptide chain. The nascent polypeptides leave the ribosome through a tunnel in the LSU and interact with protein factors that function in enzymatic processing, targeting, and the membrane insertion of nascent chains at the exit of the ribosomal tunnel. This chain is Large ribosomal subunit protein uL22B, found in Saccharomyces cerevisiae (strain ATCC 204508 / S288c) (Baker's yeast).